The primary structure comprises 191 residues: Hypoxanthine/guanine phosphoribosyltransferase (191 aa).

The protein belongs to the purine/pyrimidine phosphoribosyltransferase family. Archaeal HPRT subfamily. Homodimer.

The protein localises to the cytoplasm. The enzyme catalyses IMP + diphosphate = hypoxanthine + 5-phospho-alpha-D-ribose 1-diphosphate. It carries out the reaction GMP + diphosphate = guanine + 5-phospho-alpha-D-ribose 1-diphosphate. The protein operates within purine metabolism; IMP biosynthesis via salvage pathway; IMP from hypoxanthine: step 1/1. Catalyzes a salvage reaction resulting in the formation of IMP that is energically less costly than de novo synthesis. This is Hypoxanthine/guanine phosphoribosyltransferase from Methanocella paludicola (strain DSM 17711 / JCM 13418 / NBRC 101707 / SANAE).